Reading from the N-terminus, the 369-residue chain is Probable methyltransferase TCM_000331 (369 aa).

Tyr-18, Cys-60, Asn-65, Asp-98, Leu-99, Ser-137, and Phe-138 together coordinate S-adenosyl-L-homocysteine. Residues Asn-176, Asp-261, Phe-263, and Asn-264 each contribute to the Mg(2+) site.

The protein belongs to the methyltransferase superfamily. Type-7 methyltransferase family. The cofactor is Mg(2+).

In Theobroma cacao (Cacao), this protein is Probable methyltransferase TCM_000331.